A 277-amino-acid chain; its full sequence is Glycerol-3-phosphate acyltransferase (277 aa).

The next 5 helical transmembrane spans lie at 3-23 (LFIF…AIIV), 55-75 (IMVM…AKLL), 79-99 (PVTV…PVFF), 111-131 (IGAL…TWLL), and 155-175 (LILV…ILVL). Residues 207–277 (SPATSAEQEF…PKTKTVKEKE (71 aa)) are disordered. Basic and acidic residues predominate over residues 216–239 (FPGKEVIDTNIDETEKTEQAEAVK). 2 stretches are compositionally biased toward basic residues: residues 240 to 253 (KPKA…AKKT) and 262 to 271 (KPRSTKPKTK).

This sequence belongs to the PlsY family. As to quaternary structure, probably interacts with PlsX.

The protein localises to the cell inner membrane. The catalysed reaction is an acyl phosphate + sn-glycerol 3-phosphate = a 1-acyl-sn-glycero-3-phosphate + phosphate. It functions in the pathway lipid metabolism; phospholipid metabolism. In terms of biological role, catalyzes the transfer of an acyl group from acyl-phosphate (acyl-PO(4)) to glycerol-3-phosphate (G3P) to form lysophosphatidic acid (LPA). This enzyme utilizes acyl-phosphate as fatty acyl donor, but not acyl-CoA or acyl-ACP. The protein is Glycerol-3-phosphate acyltransferase of Legionella pneumophila (strain Paris).